The chain runs to 100 residues: Putative membrane protein insertion efficiency factor (100 aa).

It belongs to the UPF0161 family.

It localises to the cell membrane. Could be involved in insertion of integral membrane proteins into the membrane. This is Putative membrane protein insertion efficiency factor from Enterococcus faecalis (strain ATCC 700802 / V583).